We begin with the raw amino-acid sequence, 454 residues long: MFRGKVRKIHFIGIGGSGMNGIAELLLNQGYTITGSDLKESPTIERLRNLGAKIFIGHSEENVKDADVVVYSSAVKPDNPEMIKAKQLGIPTIPRGEMLAELMRFKYGIAIAGSHGKTTTTSMVGTVLGKTGFDPTVVIGGKLEAYGSNAKLGRGEFLVTESDESDGSFLKLTPTIVSINNIDLEHIGFYKDLEDIKKAFVAFANKVPFYGAAAVNIDDENVKSILPYIERKVIKFGFSEDADIRAYDVRLENGRYKFKVNDFGEIHLSVPGIHNVYNALATIAICNELSVPFCVIKESLENFKNAKRRFEIKYSNDIIVIDDYAHHPTELKATLSAARDYFKDRRIIAVFQPHRYSRLNALFEEFAKAFDIPDITIVTEVYSAGESPIENVSGEKLAEKIREYGNNVYYVSNLEEAENLLKNIIQKGDVILTLGAGSITQLSDTLAKYLSEKE.

113-119 (GSHGKTT) contributes to the ATP binding site.

This sequence belongs to the MurCDEF family.

Its subcellular location is the cytoplasm. The enzyme catalyses UDP-N-acetyl-alpha-D-muramate + L-alanine + ATP = UDP-N-acetyl-alpha-D-muramoyl-L-alanine + ADP + phosphate + H(+). It functions in the pathway cell wall biogenesis; peptidoglycan biosynthesis. In terms of biological role, cell wall formation. The chain is UDP-N-acetylmuramate--L-alanine ligase from Sulfurihydrogenibium sp. (strain YO3AOP1).